The primary structure comprises 337 residues: Ketol-acid reductoisomerase (NADP(+)) (337 aa).

Positions 3 to 183 (VEVFYDDDAD…GGTRAGAIRT (181 aa)) constitute a KARI N-terminal Rossmann domain. NADP(+) is bound by residues 26 to 29 (YGSQ), Ser-52, Ser-54, and 84 to 87 (DTAQ). His-109 is a catalytic residue. Gly-135 serves as a coordination point for NADP(+). A KARI C-terminal knotted domain is found at 184–329 (TFTEETETDL…SKLRGMMSWV (146 aa)). The Mg(2+) site is built by Asp-192, Glu-196, Glu-228, and Glu-232. Ser-253 is a binding site for substrate.

This sequence belongs to the ketol-acid reductoisomerase family. It depends on Mg(2+) as a cofactor.

The enzyme catalyses (2R)-2,3-dihydroxy-3-methylbutanoate + NADP(+) = (2S)-2-acetolactate + NADPH + H(+). It carries out the reaction (2R,3R)-2,3-dihydroxy-3-methylpentanoate + NADP(+) = (S)-2-ethyl-2-hydroxy-3-oxobutanoate + NADPH + H(+). Its pathway is amino-acid biosynthesis; L-isoleucine biosynthesis; L-isoleucine from 2-oxobutanoate: step 2/4. It functions in the pathway amino-acid biosynthesis; L-valine biosynthesis; L-valine from pyruvate: step 2/4. Functionally, involved in the biosynthesis of branched-chain amino acids (BCAA). Catalyzes an alkyl-migration followed by a ketol-acid reduction of (S)-2-acetolactate (S2AL) to yield (R)-2,3-dihydroxy-isovalerate. In the isomerase reaction, S2AL is rearranged via a Mg-dependent methyl migration to produce 3-hydroxy-3-methyl-2-ketobutyrate (HMKB). In the reductase reaction, this 2-ketoacid undergoes a metal-dependent reduction by NADPH to yield (R)-2,3-dihydroxy-isovalerate. The chain is Ketol-acid reductoisomerase (NADP(+)) from Salinispora arenicola (strain CNS-205).